A 162-amino-acid chain; its full sequence is Endoribonuclease YbeY (162 aa).

Positions 127, 131, and 137 each coordinate Zn(2+).

The protein belongs to the endoribonuclease YbeY family. It depends on Zn(2+) as a cofactor.

The protein resides in the cytoplasm. Single strand-specific metallo-endoribonuclease involved in late-stage 70S ribosome quality control and in maturation of the 3' terminus of the 16S rRNA. The polypeptide is Endoribonuclease YbeY (Acetivibrio thermocellus (strain ATCC 27405 / DSM 1237 / JCM 9322 / NBRC 103400 / NCIMB 10682 / NRRL B-4536 / VPI 7372) (Clostridium thermocellum)).